The following is a 512-amino-acid chain: Retinaldehyde dehydrogenase 3 (512 aa).

A disordered region spans residues 1–23 (MATANGAVENGQPDGKPPALPRP). Ala-2 is modified (N-acetylalanine). NAD(+) is bound by residues Lys-204, Glu-207, and 257 to 262 (GSTEVG). Residue Glu-280 is the Proton acceptor of the active site. Cys-314 (nucleophile) is an active-site residue. NAD(+) is bound by residues Gln-361 and Glu-411.

The protein belongs to the aldehyde dehydrogenase family. In terms of assembly, homotetramer.

It localises to the cytoplasm. It carries out the reaction all-trans-retinal + NAD(+) + H2O = all-trans-retinoate + NADH + 2 H(+). The catalysed reaction is retinal + NAD(+) + H2O = retinoate + NADH + 2 H(+). It catalyses the reaction all-trans-13,14-dihydroretinal + NAD(+) + H2O = all-trans-13,14-dihydroretinoate + NADH + 2 H(+). It functions in the pathway cofactor metabolism; retinol metabolism. In terms of biological role, catalyzes the NAD-dependent oxidation of aldehyde substrates, such as all-trans-retinal and all-trans-13,14-dihydroretinal, to their corresponding carboxylic acids, all-trans-retinoate and all-trans-13,14-dihydroretinoate, respectively. High specificity for all-trans-retinal as substrate, can also accept acetaldehyde as substrate in vitro but with lower affinity. Required for the biosynthesis of normal levels of retinoate in the embryonic ocular and nasal regions; a critical lipid in the embryonic development of the eye and the nasal region. In Rattus norvegicus (Rat), this protein is Retinaldehyde dehydrogenase 3 (Aldh1a3).